The sequence spans 327 residues: Glycerol-3-phosphate dehydrogenase [NAD(P)+] (327 aa).

NADPH-binding residues include serine 10, phenylalanine 11, arginine 31, and lysine 108. The sn-glycerol 3-phosphate site is built by lysine 108, glycine 136, and serine 138. Alanine 140 provides a ligand contact to NADPH. Residues lysine 191, aspartate 246, serine 256, arginine 257, and asparagine 258 each contribute to the sn-glycerol 3-phosphate site. Lysine 191 (proton acceptor) is an active-site residue. Residue arginine 257 participates in NADPH binding. 2 residues coordinate NADPH: leucine 281 and glutamate 283.

Belongs to the NAD-dependent glycerol-3-phosphate dehydrogenase family.

It localises to the cytoplasm. The catalysed reaction is sn-glycerol 3-phosphate + NAD(+) = dihydroxyacetone phosphate + NADH + H(+). It catalyses the reaction sn-glycerol 3-phosphate + NADP(+) = dihydroxyacetone phosphate + NADPH + H(+). It functions in the pathway membrane lipid metabolism; glycerophospholipid metabolism. Its function is as follows. Catalyzes the reduction of the glycolytic intermediate dihydroxyacetone phosphate (DHAP) to sn-glycerol 3-phosphate (G3P), the key precursor for phospholipid synthesis. This is Glycerol-3-phosphate dehydrogenase [NAD(P)+] from Ehrlichia ruminantium (strain Welgevonden).